The sequence spans 153 residues: Acetylacetone-cleaving enzyme (153 aa).

Homotetramer. Fe cation is required as a cofactor.

The enzyme catalyses acetylacetone + O2 = methylglyoxal + acetate + H(+). The protein operates within xenobiotic degradation; acetylacetone degradation. Its function is as follows. Cleaves acetylacetone to equimolar amounts of methylglyoxal and acetate, consuming one equivalent of molecular oxygen. The polypeptide is Acetylacetone-cleaving enzyme (dke1) (Acinetobacter johnsonii).